The chain runs to 245 residues: Sugar fermentation stimulation protein homolog (245 aa).

This sequence belongs to the SfsA family.

The chain is Sugar fermentation stimulation protein homolog from Rhodospirillum rubrum (strain ATCC 11170 / ATH 1.1.1 / DSM 467 / LMG 4362 / NCIMB 8255 / S1).